The chain runs to 1209 residues: DNA-directed RNA polymerase subunit beta (1209 aa).

Positions 1173 to 1192 are enriched in basic and acidic residues; sequence QQEKKKLAEEAAKKDDKPDE. Residues 1173-1209 form a disordered region; it reads QQEKKKLAEEAAKKDDKPDEPVDESDSSTSSDDKVSK.

The protein belongs to the RNA polymerase beta chain family. As to quaternary structure, the RNAP catalytic core consists of 2 alpha, 1 beta, 1 beta' and 1 omega subunit. When a sigma factor is associated with the core the holoenzyme is formed, which can initiate transcription.

The enzyme catalyses RNA(n) + a ribonucleoside 5'-triphosphate = RNA(n+1) + diphosphate. In terms of biological role, DNA-dependent RNA polymerase catalyzes the transcription of DNA into RNA using the four ribonucleoside triphosphates as substrates. This chain is DNA-directed RNA polymerase subunit beta, found in Lactobacillus johnsonii (strain CNCM I-12250 / La1 / NCC 533).